The following is a 230-amino-acid chain: Ion-translocating oxidoreductase complex subunit E (230 aa).

Transmembrane regions (helical) follow at residues 11-31 (GMWA…LLAV), 39-59 (LGLG…VSLV), 69-89 (IPVF…LMNA), 93-113 (GLYL…IIIG), 132-152 (FWMG…REII), and 182-202 (SFLL…LIAL).

Belongs to the NqrDE/RnfAE family. In terms of assembly, the complex is composed of six subunits: RnfA, RnfB, RnfC, RnfD, RnfE and RnfG.

It localises to the cell inner membrane. Functionally, part of a membrane-bound complex that couples electron transfer with translocation of ions across the membrane. This is Ion-translocating oxidoreductase complex subunit E from Vibrio atlanticus (strain LGP32) (Vibrio splendidus (strain Mel32)).